Consider the following 423-residue polypeptide: MIRIPRGTQDILPEDSSKWRYIENQLDKLMKLYNYKEIRTPIFESTDLFARGVGDSTDVVQKEMYTFKDKGDRSITLRPEGTAAVVRSYIENKMQGIPNQPVKLYYNGPMFRYERKQKGRYRQFTQFGVEAIGAENPSMDAEVLAMVMHIYESFGLKHLKLVINSIGDADSRKEYNEALIRHFEPVIDTFCDDCKSRLHTNPMRILDCKIDRDKEAVKNAPRITDYLNDDSKAYFNEVKTHLDDLGISYVEDPNLVRGLDYYTHTAFELMMDNPNYDGAITTLCGGGRYNGLLELLDGPNQTGIGFALSIERLLLALEEEGIELDVEDTFDLFIVTMGEEAERYSVKLLNQLRKSGIKADKDYLQRKVKGQMKQADRLNAQYTVVIGDQELENEVIDVKDMSTGETETINLNNLVNYFQEKNN.

It belongs to the class-II aminoacyl-tRNA synthetase family. As to quaternary structure, homodimer.

Its subcellular location is the cytoplasm. The enzyme catalyses tRNA(His) + L-histidine + ATP = L-histidyl-tRNA(His) + AMP + diphosphate + H(+). This chain is Histidine--tRNA ligase, found in Staphylococcus haemolyticus (strain JCSC1435).